We begin with the raw amino-acid sequence, 47 residues long: Photosystem II reaction center protein K (47 aa).

The propeptide occupies 1–10; the sequence is MALINFDLLA. A helical transmembrane segment spans residues 26–46; it reads LPLIPLFFFLLVFVWQAAVGF.

Belongs to the PsbK family. As to quaternary structure, PSII is composed of 1 copy each of membrane proteins PsbA, PsbB, PsbC, PsbD, PsbE, PsbF, PsbH, PsbI, PsbJ, PsbK, PsbL, PsbM, PsbT, PsbX, PsbY, Psb30/Ycf12, peripheral proteins PsbO, CyanoQ (PsbQ), PsbU, PsbV and a large number of cofactors. It forms dimeric complexes.

The protein resides in the cellular thylakoid membrane. Its function is as follows. One of the components of the core complex of photosystem II (PSII). PSII is a light-driven water:plastoquinone oxidoreductase that uses light energy to abstract electrons from H(2)O, generating O(2) and a proton gradient subsequently used for ATP formation. It consists of a core antenna complex that captures photons, and an electron transfer chain that converts photonic excitation into a charge separation. This chain is Photosystem II reaction center protein K, found in Prochlorococcus marinus (strain NATL2A).